The following is a 296-amino-acid chain: Cytidine deaminase (296 aa).

2 CMP/dCMP-type deaminase domains span residues 47–167 (TEAE…FGPK) and 186–296 (DSSD…VDPV). 88–90 (NLE) is a substrate binding site. Histidine 101 is a binding site for Zn(2+). The active-site Proton donor is glutamate 103. Residues cysteine 128 and cysteine 131 each contribute to the Zn(2+) site.

It belongs to the cytidine and deoxycytidylate deaminase family. In terms of assembly, homodimer. Requires Zn(2+) as cofactor.

The catalysed reaction is cytidine + H2O + H(+) = uridine + NH4(+). It carries out the reaction 2'-deoxycytidine + H2O + H(+) = 2'-deoxyuridine + NH4(+). Its function is as follows. This enzyme scavenges exogenous and endogenous cytidine and 2'-deoxycytidine for UMP synthesis. The chain is Cytidine deaminase from Shewanella sp. (strain MR-7).